A 418-amino-acid polypeptide reads, in one-letter code: Argininosuccinate synthase (418 aa).

Position 16-24 (16-24 (AYSGGLDTS)) interacts with ATP. Tyrosine 95 is an L-citrulline binding site. Glycine 125 is an ATP binding site. 3 residues coordinate L-aspartate: threonine 127, asparagine 131, and aspartate 132. Asparagine 131 provides a ligand contact to L-citrulline. L-citrulline-binding residues include arginine 135, serine 183, glutamate 267, and tyrosine 279.

The protein belongs to the argininosuccinate synthase family. Type 1 subfamily. Homotetramer.

The protein localises to the cytoplasm. The catalysed reaction is L-citrulline + L-aspartate + ATP = 2-(N(omega)-L-arginino)succinate + AMP + diphosphate + H(+). It functions in the pathway amino-acid biosynthesis; L-arginine biosynthesis; L-arginine from L-ornithine and carbamoyl phosphate: step 2/3. This chain is Argininosuccinate synthase, found in Bifidobacterium adolescentis (strain ATCC 15703 / DSM 20083 / NCTC 11814 / E194a).